The sequence spans 1156 residues: Cartilage intermediate layer protein 2 (1156 aa).

An N-terminal signal peptide occupies residues 1–20; it reads MASLLPLLCLCVVAAHLAGA. Residues 146-197 enclose the TSP type-1 domain; it reads EASWGAWGPWGPCSGSCGPGRRLRRRHCPSPAGDACPGRPLEAQKCVRPRCP. Disulfide bonds link Cys158–Cys191, Cys162–Cys196, and Cys173–Cys181. 3 N-linked (GlcNAc...) asparagine glycosylation sites follow: Asn276, Asn308, and Asn329. The region spanning 292-376 is the Ig-like C2-type domain; the sequence is PYLVKHPESR…AVRSGTARLT (85 aa). Cys313 and Cys359 form a disulfide bridge. Residues 1134–1156 form a disordered region; that stretch reads SEAAQAQARASGPLRTRRGRVRQ.

In terms of processing, may be cleaved into 2 chains possibly by a furin-like protease upon or preceding secretion. As to expression, expressed in articular chondrocytes but not in knee meniscal cartilage cells. Localizes to the intermediate to deep zone of articular cartilage.

The protein localises to the secreted. It is found in the extracellular space. The protein resides in the extracellular matrix. Functionally, may play a role in cartilage scaffolding. This chain is Cartilage intermediate layer protein 2 (CILP2), found in Homo sapiens (Human).